Here is a 134-residue protein sequence, read N- to C-terminus: Complexin-1 (134 aa).

Positions 1–112 (MEFVMKQALG…PGCGDAAEEE (112 aa)) are disordered. A compositionally biased stretch (basic and acidic residues) spans 15 to 81 (DMGKMLGGDE…IKKKEEREAE (67 aa)). The stretch at 29–69 (DAAKKEEERQEALRQEEEERKAKYAKMEAEREAVRQGIRDK) forms a coiled coil. Residues 48–70 (RKAKYAKMEAEREAVRQGIRDKY) are interaction with the SNARE complex.

The protein belongs to the complexin/synaphin family. Binds to the SNARE core complex containing SNAP25, VAMP2 and STX1A.

It localises to the cytoplasm. It is found in the cytosol. Its subcellular location is the perikaryon. The protein localises to the presynapse. Functionally, positively regulates a late step in synaptic vesicle exocytosis. Organizes the SNAREs into a cross-linked zigzag topology that, when interposed between the vesicle and plasma membranes, is incompatible with fusion, thereby preventing SNAREs from releasing neurotransmitters until an action potential arrives at the synapse. Also involved in glucose-induced secretion of insulin by pancreatic beta-cells. This Bos taurus (Bovine) protein is Complexin-1 (CPLX1).